The following is a 221-amino-acid chain: uncharacterized protein (221 aa).

The N-terminal stretch at 1-30 (MAKFNNNILLIILIIVILFIIFYFLNKNNQ) is a signal peptide.

It is found in the virion. This is an uncharacterized protein from Acanthamoeba polyphaga mimivirus (APMV).